The chain runs to 152 residues: Prostaglandin E synthase (152 aa).

The Lumenal segment spans residues 1–12 (MPAHSLAMSSPA). The helical transmembrane segment at 13 to 41 (LPAFLLCSTLLVIKMYVVAIITGQVRLRK) threads the bilayer. Residue R38 coordinates glutathione. The Cytoplasmic portion of the chain corresponds to 42-60 (KAFANPEDALRHGGPQYCR). A helical transmembrane segment spans residues 61–90 (SDPDVERCLRAHRNDMETIYPFLFLGFVYS). Residue 73-77 (RNDME) coordinates glutathione. Residues 91-95 (FLGPN) are Lumenal-facing. The helical transmembrane segment at 96–119 (PFVAWMHFLVFLLGRVVHTVAYLG) threads the bilayer. Glutathione contacts are provided by H113 and Y117. Topologically, residues 120–123 (KLRA) are cytoplasmic. A helical membrane pass occupies residues 124-152 (PIRSVTYTLAQLPCASMALQILWEAARHL). 126 to 130 (RSVTY) lines the glutathione pocket.

The protein belongs to the MAPEG family. Homotrimer. Requires glutathione as cofactor.

It localises to the membrane. It is found in the cytoplasm. The protein localises to the perinuclear region. It carries out the reaction prostaglandin H2 = prostaglandin E2. It catalyses the reaction 2-glyceryl-prostaglandin H2 = 2-glyceryl-prostaglandin E2. The catalysed reaction is prostaglandin G2 = (15S)-15-hydroperoxy-prostaglandin E2. The enzyme catalyses 1-chloro-2,4-dinitrobenzene + glutathione = 2,4-dinitrophenyl-S-glutathione + chloride + H(+). It carries out the reaction (5S)-hydroperoxy-(6E,8Z,11Z,14Z)-eicosatetraenoate + 2 glutathione = (5S)-hydroxy-(6E,8Z,11Z,14Z)-eicosatetraenoate + glutathione disulfide + H2O. Its pathway is lipid metabolism; prostaglandin biosynthesis. Functionally, terminal enzyme of the cyclooxygenase (COX)-2-mediated prostaglandin E2 (PGE2) biosynthetic pathway. Catalyzes the glutathione-dependent oxidoreduction of prostaglandin endoperoxide H2 (PGH2) to prostaglandin E2 (PGE2) in response to inflammatory stimuli. Plays a key role in inflammation response, fever and pain. Also catalyzes the oxidoreduction of endocannabinoids into prostaglandin glycerol esters and PGG2 into 15-hydroperoxy-PGE2. In addition, displays low glutathione transferase and glutathione-dependent peroxidase activities, toward 1-chloro-2,4-dinitrobenzene and 5-hydroperoxyicosatetraenoic acid (5-HPETE), respectively. The protein is Prostaglandin E synthase (PTGES) of Macaca fascicularis (Crab-eating macaque).